The primary structure comprises 1353 residues: Tenascin-R (1353 aa).

The signal sequence occupies residues Met-1 to Leu-33. The stretch at Ser-132–Ser-156 forms a coiled coil. N-linked (GlcNAc...) asparagine glycosylation is found at Asn-179 and Asn-197. EGF-like domains lie at Cys-187–Cys-198, Cys-234–Cys-260, Cys-265–Cys-291, and Gly-292–Ser-323. Residue Asn-277 is glycosylated (N-linked (GlcNAc...) asparagine). 2 cysteine pairs are disulfide-bonded: Cys-296–Cys-306 and Cys-313–Cys-322. Fibronectin type-III domains follow at residues Pro-327–Gly-419, Leu-420–Asp-504, Gly-505–Asp-594, Ala-595–Asp-686, Ser-687–Ile-776, Thr-777–Asp-863, Ala-864–Ala-952, Pro-953–Asp-1037, and Pro-1038–Val-1126. Asn-391, Asn-469, and Asn-580 each carry an N-linked (GlcNAc...) asparagine glycan. N-linked (GlcNAc...) asparagine glycans are attached at residues Asn-734, Asn-790, Asn-872, Asn-1031, Asn-1041, Asn-1256, and Asn-1342. The Fibrinogen C-terminal domain occupies Gly-1124–Asn-1339.

It belongs to the tenascin family. Forms homodimers and homotrimers. Interacts with CNTN1, NFASC and CSPG5. In terms of tissue distribution, brain specific.

The protein localises to the secreted. The protein resides in the extracellular space. It is found in the extracellular matrix. Neural extracellular matrix (ECM) protein involved in interactions with different cells and matrix components. Involved in cell attachment and neurite formation. Interaction with CNTN1 enhances the neurite outgrowth. This is Tenascin-R (TNR) from Gallus gallus (Chicken).